A 1085-amino-acid polypeptide reads, in one-letter code: Solute carrier family 12 member 4 (1085 aa).

Residues 1–119 (MPHFTVVPVD…RRAAKAPSMG (119 aa)) lie on the Cytoplasmic side of the membrane. Position 24 is a phosphoserine (S24). Residues 28 to 46 (YGERAEREDPDGHGNHRES) show a composition bias toward basic and acidic residues. The tract at residues 28–47 (YGERAEREDPDGHGNHRESS) is disordered. S47, S59, S81, and S88 each carry phosphoserine. The chain crosses the membrane as a discontinuously helical span at residues 120 to 141 (TLMGVYLPCLQNIFGVILFLRL). K(+) contacts are provided by N131 and I132. The Extracellular portion of the chain corresponds to 142-149 (TWMVGTAG). Residues 150–172 (VLQALLIVLICCCCTLLTAISMS) traverse the membrane as a helical segment. The Cytoplasmic portion of the chain corresponds to 173–196 (AIATNGVVPAGGSYFMISRSLGPE). The helical transmembrane segment at 197-225 (FGGAVGLCFYLGTTFAAAMYILGAIEILL) threads the bilayer. Y216 provides a ligand contact to K(+). The Extracellular portion of the chain corresponds to 226–248 (TYIAPPAAIFYPSGTHDTSNATL). N-linked (GlcNAc...) asparagine glycosylation is present at N245. Helical transmembrane passes span 249–271 (NNMRVYGTVFLSFMTLVVFVGVK) and 272–297 (YVNKFASLFLACVIISILSIYAGGIK). The Extracellular segment spans residues 298–419 (SMFDPPVFPV…LYVVADIATS (122 aa)). C308 and C323 are joined by a disulfide. N-linked (GlcNAc...) asparagine glycosylation is found at N312, N331, and N347. Residues C343 and C353 are joined by a disulfide bond. The chain crosses the membrane as a helical span at residues 420 to 440 (FTVLVGIFFPSVTGIMAGSNR). K(+)-binding residues include P429 and T432. Residues G433, I434, and M435 each coordinate chloride. Residues 441-450 (SGDLRDAQKS) are Cytoplasmic-facing. Residues 451–473 (IPVGTILAIVTTSLVYFSSVVLF) traverse the membrane as a helical segment. The Extracellular segment spans residues 474–504 (GACIEGVVLRDKYGDGVSRNLVVGTLAWPSP). Residues 505 to 531 (WVIVVGSFFSTCGAGLQSLTGAPRLLQ) form a helical membrane-spanning segment. Over 532–554 (AIAKDNIIPFLRVFGHGKANGEP) the chain is Cytoplasmic. Transmembrane regions (helical) follow at residues 555 to 575 (TWALLLTALIAELGILIASLD) and 576 to 598 (MVAPILSMFFLMCYLFVNLACAV). Y589 contributes to the chloride binding site. The Cytoplasmic segment spans residues 599–612 (QTLLRTPNWRPRFK). Transmembrane regions (helical) follow at residues 613–635 (YYHWALSFLGMSLCLALMFVSSW) and 636–651 (YYALVAMLIAGMIYKY). Topologically, residues 652–1085 (IEYQGAEKEW…GGREVITIYS (434 aa)) are cytoplasmic. A scissor helix region spans residues 665–681 (IRGLSLSAARYALLRLE). L697, K699, K707, Y708, and V730 together coordinate ATP. Residue S734 is modified to Phosphoserine. Residues G794, W795, and Y797 each contribute to the ATP site. 2 positions are modified to phosphoserine: S916 and S967. The residue at position 983 (T983) is a Phosphothreonine. S1050 is subject to Phosphoserine.

Belongs to the SLC12A transporter family. K/Cl co-transporter subfamily. Homodimer; adopts a domain-swap conformation at the scissor helices connecting the transmembrane domain and C-terminal domain. Heterodimer with other K-Cl cotransporters. Post-translationally, N-glycosylated. Phosphorylated, phosphorylation may regulate transporter activity.

The protein localises to the cell membrane. It catalyses the reaction K(+)(in) + chloride(in) = K(+)(out) + chloride(out). Inhibited by WNK3. Its function is as follows. Mediates electroneutral potassium-chloride cotransport when activated by cell swelling. May contribute to cell volume homeostasis in single cells. May be involved in the regulation of basolateral Cl(-) exit in NaCl absorbing epithelia. The polypeptide is Solute carrier family 12 member 4 (SLC12A4) (Oryctolagus cuniculus (Rabbit)).